The following is a 158-amino-acid chain: Fucolectin (158 aa).

The tract at residues lysine 16–valine 148 is F5/8 type C-like. Ca(2+)-binding residues include asparagine 35, aspartate 38, asparagine 40, and serine 49. 3 disulfides stabilise this stretch: cysteine 50–cysteine 146, cysteine 82–cysteine 83, and cysteine 108–cysteine 124. 2 residues coordinate alpha-L-fucose: histidine 52 and arginine 79. The short motif at arginine 79 to aspartate 81 is the Cell attachment site element. Arginine 86 provides a ligand contact to alpha-L-fucose. 2 residues coordinate Ca(2+): cysteine 146 and glutamate 147.

It belongs to the fucolectin family. In terms of assembly, homotrimer.

The protein localises to the secreted. Its function is as follows. Acts as a defensive agent. Recognizes blood group fucosylated oligosaccharides including A, B, H and Lewis B-type antigens. Does not recognize Lewis A antigen and has low affinity for monovalent haptens. This Anguilla anguilla (European freshwater eel) protein is Fucolectin.